The primary structure comprises 779 residues: Ribosome-releasing factor 2, mitochondrial (779 aa).

The 286-residue stretch at 68–353 folds into the tr-type G domain; the sequence is AKIRNIGIMA…AVTTYLPSPE (286 aa). GTP-binding positions include 77–84, 141–145, and 195–198; these read AHIDAGKT, DTPGH, and NKMD.

The protein belongs to the TRAFAC class translation factor GTPase superfamily. Classic translation factor GTPase family. EF-G/EF-2 subfamily.

It localises to the mitochondrion. The catalysed reaction is GTP + H2O = GDP + phosphate + H(+). Its function is as follows. Mitochondrial GTPase that mediates the disassembly of ribosomes from messenger RNA at the termination of mitochondrial protein biosynthesis. Acts in collaboration with MRRF. GTP hydrolysis follows the ribosome disassembly and probably occurs on the ribosome large subunit. Not involved in the GTP-dependent ribosomal translocation step during translation elongation. This chain is Ribosome-releasing factor 2, mitochondrial (Gfm2), found in Mus musculus (Mouse).